A 391-amino-acid polypeptide reads, in one-letter code: MSRFLICSFALVLLYPAGIDMYLVGLPRIAADLNASEAQLHIAFSVYLAGMAAAMLFAGKVADRSGRKPVAIPGAALFIIASVFCSLAETSTLFLAGRFLQGLGAGCCYVVAFAILRDTLDDRRRAKVLSLLNGITCIIPVLAPVLGHLIMLKFPWQSLFWAMATMGIAVLMLSLFILKETRPAAPAASDKPRENRESLLNRFFLSRVVITTLSVSVILTFVNTSPVLLMEIMGFERGEYATIMALTAGVSMTVSFSTPFALGIFKPRTLMITSQVLFLAAGITLAVSPSHAISLFGITLICAGFSIGFGVAMSQALGPFSLRAGVASSTLGIAQVCGSSLWIWLAAVVGIGAWNMLIGILIACSIVSLLLIMFVTPGRPVAAHEEIHHHA.

12 consecutive transmembrane segments (helical) span residues 4-24 (FLICSFALVLLYPAGIDMYLV), 42-62 (IAFSVYLAGMAAAMLFAGKVA), 69-89 (PVAIPGAALFIIASVFCSLAE), 93-113 (LFLAGRFLQGLGAGCCYVVAF), 131-151 (LLNGITCIIPVLAPVLGHLIM), 158-178 (SLFWAMATMGIAVLMLSLFIL), 203-222 (FFLSRVVITTLSVSVILTFV), 245-265 (ALTAGVSMTVSFSTPFALGIF), 269-289 (TLMITSQVLFLAAGITLAVSP), 293-313 (ISLFGITLICAGFSIGFGVAM), 324-346 (AGVASSTLGIAQVCGSSLWIWLA), and 363-383 (ACSIVSLLLIMFVTPGRPVAA).

Belongs to the major facilitator superfamily. DHA1 family. MdtL (TC 2.A.1.2.22) subfamily.

It localises to the cell inner membrane. Functionally, confers resistance to chloramphenicol. The chain is Multidrug resistance protein MdtL from Escherichia fergusonii (strain ATCC 35469 / DSM 13698 / CCUG 18766 / IAM 14443 / JCM 21226 / LMG 7866 / NBRC 102419 / NCTC 12128 / CDC 0568-73).